Consider the following 570-residue polypeptide: Adenine deaminase (570 aa).

It belongs to the metallo-dependent hydrolases superfamily. Adenine deaminase family. It depends on Mn(2+) as a cofactor.

The catalysed reaction is adenine + H2O + H(+) = hypoxanthine + NH4(+). In Oleidesulfovibrio alaskensis (strain ATCC BAA-1058 / DSM 17464 / G20) (Desulfovibrio alaskensis), this protein is Adenine deaminase.